A 328-amino-acid polypeptide reads, in one-letter code: Glucokinase (328 aa).

Ala-16 to Thr-21 is a binding site for ATP.

The protein belongs to the bacterial glucokinase family.

The protein resides in the cytoplasm. It catalyses the reaction D-glucose + ATP = D-glucose 6-phosphate + ADP + H(+). The sequence is that of Glucokinase from Neisseria gonorrhoeae (strain ATCC 700825 / FA 1090).